The sequence spans 157 residues: Transcription elongation factor GreA (157 aa).

Residues 9 to 30 adopt a coiled-coil conformation; that stretch reads LEGAQQLKEELKRRKTTDRKRI.

It belongs to the GreA/GreB family.

Its function is as follows. Necessary for efficient RNA polymerase transcription elongation past template-encoded arresting sites. The arresting sites in DNA have the property of trapping a certain fraction of elongating RNA polymerases that pass through, resulting in locked ternary complexes. Cleavage of the nascent transcript by cleavage factors such as GreA or GreB allows the resumption of elongation from the new 3'terminus. GreA releases sequences of 2 to 3 nucleotides. The protein is Transcription elongation factor GreA of Magnetococcus marinus (strain ATCC BAA-1437 / JCM 17883 / MC-1).